The following is a 320-amino-acid chain: Transcription factor bHLH96 (320 aa).

The tract at residues Glu30–Glu121 is disordered. Residues Tyr65 to Leu76 show a composition bias toward acidic residues. Positions Gly104 to Ser114 are enriched in basic residues. The bHLH domain maps to Asn122 to Leu173. Residues Val184–Ser206 form a disordered region. Residues Ser244–Ser320 form the ACT domain.

In terms of assembly, homodimer. As to expression, expressed constitutively in roots, leaves, stems, and flowers.

It is found in the nucleus. In Arabidopsis thaliana (Mouse-ear cress), this protein is Transcription factor bHLH96 (BHLH96).